The following is a 350-amino-acid chain: Galactokinase (350 aa).

14-17 (EHTD) lines the substrate pocket. Residues serine 46 and 96-102 (GAGLSSS) contribute to the ATP site. Mg(2+) contacts are provided by serine 102 and glutamate 134. The active-site Proton acceptor is the aspartate 146. Residue tyrosine 196 coordinates substrate.

The protein belongs to the GHMP kinase family. GalK subfamily.

The protein resides in the cytoplasm. The catalysed reaction is alpha-D-galactose + ATP = alpha-D-galactose 1-phosphate + ADP + H(+). It functions in the pathway carbohydrate metabolism; galactose metabolism. In terms of biological role, catalyzes the transfer of the gamma-phosphate of ATP to D-galactose to form alpha-D-galactose-1-phosphate (Gal-1-P). In Thermotoga petrophila (strain ATCC BAA-488 / DSM 13995 / JCM 10881 / RKU-1), this protein is Galactokinase.